Reading from the N-terminus, the 105-residue chain is Met repressor (105 aa).

This sequence belongs to the MetJ family. Homodimer.

Its subcellular location is the cytoplasm. Its function is as follows. This regulatory protein, when combined with SAM (S-adenosylmethionine) represses the expression of the methionine regulon and of enzymes involved in SAM synthesis. The chain is Met repressor from Glaesserella parasuis serovar 5 (strain SH0165) (Haemophilus parasuis).